The sequence spans 313 residues: Extracellular metalloprotease (313 aa).

Positions 1–34 (MKLVPRFRKQWFAYLTVLCLALAAAVSFGVPAKA) are cleaved as a signal peptide. A disordered region spans residues 35–74 (AENPQTSVSNTGKEADATKNQTSKADQVSAPYEGTGKTSK). Residues 35–93 (AENPQTSVSNTGKEADATKNQTSKADQVSAPYEGTGKTSKSLYGGQTELEKNIQTLQPS) constitute a propeptide that is removed on maturation. Polar residues predominate over residues 37–60 (NPQTSVSNTGKEADATKNQTSKAD). A disulfide bridge links C131 with C147. Active-site charge relay system residues include H146 and S267.

It belongs to the peptidase S1B family. As to quaternary structure, monomer.

The protein localises to the secreted. This chain is Extracellular metalloprotease (mpr), found in Bacillus subtilis (strain 168).